The sequence spans 192 residues: Pyridoxal 5'-phosphate synthase subunit PdxT (192 aa).

53 to 55 (GES) serves as a coordination point for L-glutamine. Cys-82 (nucleophile) is an active-site residue. Residues Arg-108 and 134–135 (IR) contribute to the L-glutamine site. Catalysis depends on charge relay system residues His-170 and Glu-172.

This sequence belongs to the glutaminase PdxT/SNO family. In the presence of PdxS, forms a dodecamer of heterodimers. Only shows activity in the heterodimer.

The enzyme catalyses aldehydo-D-ribose 5-phosphate + D-glyceraldehyde 3-phosphate + L-glutamine = pyridoxal 5'-phosphate + L-glutamate + phosphate + 3 H2O + H(+). It carries out the reaction L-glutamine + H2O = L-glutamate + NH4(+). Its pathway is cofactor biosynthesis; pyridoxal 5'-phosphate biosynthesis. In terms of biological role, catalyzes the hydrolysis of glutamine to glutamate and ammonia as part of the biosynthesis of pyridoxal 5'-phosphate. The resulting ammonia molecule is channeled to the active site of PdxS. This chain is Pyridoxal 5'-phosphate synthase subunit PdxT, found in Methanothermobacter thermautotrophicus (strain ATCC 29096 / DSM 1053 / JCM 10044 / NBRC 100330 / Delta H) (Methanobacterium thermoautotrophicum).